A 209-amino-acid polypeptide reads, in one-letter code: Ribosomal RNA large subunit methyltransferase E (209 aa).

G63, W65, D83, D99, and D124 together coordinate S-adenosyl-L-methionine. Catalysis depends on K164, which acts as the Proton acceptor.

Belongs to the class I-like SAM-binding methyltransferase superfamily. RNA methyltransferase RlmE family.

Its subcellular location is the cytoplasm. The catalysed reaction is uridine(2552) in 23S rRNA + S-adenosyl-L-methionine = 2'-O-methyluridine(2552) in 23S rRNA + S-adenosyl-L-homocysteine + H(+). Its function is as follows. Specifically methylates the uridine in position 2552 of 23S rRNA at the 2'-O position of the ribose in the fully assembled 50S ribosomal subunit. This is Ribosomal RNA large subunit methyltransferase E from Vibrio vulnificus (strain CMCP6).